We begin with the raw amino-acid sequence, 92 residues long: Acylphosphatase (92 aa).

An intrachain disulfide couples Cys5 to Cys49. The Acylphosphatase-like domain maps to 5 to 92 (CIIAWIYGRV…SGELTDFRIR (88 aa)). Catalysis depends on residues Arg20 and Asn38.

This sequence belongs to the acylphosphatase family.

It carries out the reaction an acyl phosphate + H2O = a carboxylate + phosphate + H(+). The polypeptide is Acylphosphatase (Shigella boydii serotype 4 (strain Sb227)).